The sequence spans 100 residues: Urease subunit gamma (100 aa).

Belongs to the urease gamma subunit family. As to quaternary structure, heterotrimer of UreA (gamma), UreB (beta) and UreC (alpha) subunits. Three heterotrimers associate to form the active enzyme.

It is found in the cytoplasm. The enzyme catalyses urea + 2 H2O + H(+) = hydrogencarbonate + 2 NH4(+). The protein operates within nitrogen metabolism; urea degradation; CO(2) and NH(3) from urea (urease route): step 1/1. This chain is Urease subunit gamma, found in Rhodopseudomonas palustris (strain BisB5).